The sequence spans 356 residues: uncharacterized protein (356 aa).

A signal peptide spans 1–21; sequence MHWSRFVGIFLVFSVFSLVNC. The interval 293–317 is disordered; it reads RPETDYEGANLPNIPSKKGSANQPV.

This is an uncharacterized protein from Acanthamoeba polyphaga mimivirus (APMV).